The sequence spans 406 residues: MATPGNLGSSVLASKTKTKKKHFVAQKVKLFRASDPLLSVLMWGVNHSINELSHVQIPVMLMPDDFKAYSKIKVDNHLFNKENMPSHFKFKEYCPMVFRNLRERFGIDDQDFQNSLTRSAPLPNDSQARSGARFHTSYDKRYIIKTITSEDVAEMHNILKKYHQYIVECHGITLLPQFLGMYRLNVDGVEIYVIVTRNVFSHRLSVYRKYDLKGSTVAREASDKEKAKELPTLKDNDFINEGQKIYIDDNNKKVFLEKLKKDVEFLAQLKLMDYSLLVGIHDVERAEQEEVECEENDGEEEGESDGTHPVGTPPDSPGNTLNSSPPLAPGEFDPNIDVYGIKCHENSPRKEVYFMAIIDILTHYDAKKKAAHAAKTVKHGAGAEISTVNPEQYSKRFLDFIGHILT.

A2 is subject to N-acetylalanine. T3 bears the Phosphothreonine mark. Residue S14 is modified to Phosphoserine. Positions 33 to 405 (ASDPLLSVLM…RFLDFIGHIL (373 aa)) constitute a PIPK domain. Residues 59-65 (VMLMPDD) are required for interaction with PIP5K1A. 2 positions are modified to N6-acetyllysine: K89 and K145. The disordered stretch occupies residues 288–329 (QEEVECEENDGEEEGESDGTHPVGTPPDSPGNTLNSSPPLAP). The segment covering 289-304 (EEVECEENDGEEEGES) has biased composition (acidic residues).

As to quaternary structure, homodimer. Interacts with PIP4K2B; the interaction may regulate localization to the nucleus. Probably interacts with PIP5K1A; the interaction inhibits PIP5K1A kinase activity. Post-translationally, phosphorylated in tyrosines. Phosphorylation is induced by light and increases kinase activity. In terms of tissue distribution, expressed ubiquitously, with high levels in the brain. Present in most tissues, except notably skeletal muscle and small intestine.

It is found in the cell membrane. The protein localises to the nucleus. Its subcellular location is the lysosome. It localises to the cytoplasm. The protein resides in the photoreceptor inner segment. It is found in the cell projection. The protein localises to the cilium. Its subcellular location is the photoreceptor outer segment. The enzyme catalyses a 1,2-diacyl-sn-glycero-3-phospho-(1D-myo-inositol-5-phosphate) + ATP = a 1,2-diacyl-sn-glycero-3-phospho-(1D-myo-inositol-4,5-bisphosphate) + ADP + H(+). The catalysed reaction is 1,2-dihexadecanoyl-sn-glycero-3-phospho-(1D-myo-inositol-5-phosphate) + ATP = 1,2-dihexadecanoyl-sn-glycero-3-phospho-(1D-myo-inositol-4,5-bisphosphate) + ADP + H(+). It catalyses the reaction 1,2-dihexadecanoyl-sn-glycero-3-phospho-(1D-myo-inositol-5-phosphate) + GTP = 1,2-dihexadecanoyl-sn-glycero-3-phospho-(1D-myo-inositol-4,5-bisphosphate) + GDP + H(+). With respect to regulation, in rod outer segments, activated by light. Inhibited by I-OMe tyrphostin AG-538 (I-OMe-AG-538), acting as an ATP-competitive inhibitor. Functionally, catalyzes the phosphorylation of phosphatidylinositol 5-phosphate (PtdIns5P) on the fourth hydroxyl of the myo-inositol ring, to form phosphatidylinositol 4,5-bisphosphate (PtdIns(4,5)P2). Has both ATP- and GTP-dependent kinase activities. May exert its function by regulating the levels of PtdIns5P, which functions in the cytosol by increasing AKT activity and in the nucleus signals through ING2. May regulate the pool of cytosolic PtdIns5P in response to the activation of tyrosine phosphorylation. Required for lysosome-peroxisome membrane contacts and intracellular cholesterol transport through modulating peroxisomal PtdIns(4,5)P2 level. In collaboration with PIP4K2B, has a role in mediating autophagy in times of nutrient stress. Required for autophagosome-lysosome fusion and the regulation of cellular lipid metabolism. May be involved in thrombopoiesis, and the terminal maturation of megakaryocytes and regulation of their size. Negatively regulates insulin signaling through a catalytic-independent mechanism. PIP4Ks interact with PIP5Ks and suppress PIP5K-mediated PtdIns(4,5)P2 synthesis and insulin-dependent conversion to PtdIns(3,4,5)P3. The sequence is that of Phosphatidylinositol 5-phosphate 4-kinase type-2 alpha from Homo sapiens (Human).